The chain runs to 365 residues: Succinyl-diaminopimelate desuccinylase (365 aa).

H64 lines the Zn(2+) pocket. D66 is an active-site residue. Zn(2+) is bound at residue D95. The active-site Proton acceptor is E125. 3 residues coordinate Zn(2+): E126, E154, and H339.

Belongs to the peptidase M20A family. DapE subfamily. As to quaternary structure, homodimer. The cofactor is Zn(2+). It depends on Co(2+) as a cofactor.

It catalyses the reaction N-succinyl-(2S,6S)-2,6-diaminopimelate + H2O = (2S,6S)-2,6-diaminopimelate + succinate. It participates in amino-acid biosynthesis; L-lysine biosynthesis via DAP pathway; LL-2,6-diaminopimelate from (S)-tetrahydrodipicolinate (succinylase route): step 3/3. Functionally, catalyzes the hydrolysis of N-succinyl-L,L-diaminopimelic acid (SDAP), forming succinate and LL-2,6-diaminopimelate (DAP), an intermediate involved in the bacterial biosynthesis of lysine and meso-diaminopimelic acid, an essential component of bacterial cell walls. This chain is Succinyl-diaminopimelate desuccinylase, found in Campylobacter fetus subsp. fetus (strain 82-40).